The primary structure comprises 219 residues: Phosphate-specific transport system accessory protein PhoU homolog (219 aa).

This sequence belongs to the PhoU family. As to quaternary structure, homodimer.

The protein localises to the cytoplasm. Its function is as follows. Plays a role in the regulation of phosphate uptake. Encoded together with proteins of the phosphate-specific transport (Pst) system in the polycistronic pstSCAB-phoU operon. The protein is Phosphate-specific transport system accessory protein PhoU homolog of Clostridium acetobutylicum (strain ATCC 824 / DSM 792 / JCM 1419 / IAM 19013 / LMG 5710 / NBRC 13948 / NRRL B-527 / VKM B-1787 / 2291 / W).